A 513-amino-acid chain; its full sequence is V-type proton ATPase subunit B (513 aa).

Arginine 375 is a binding site for ATP. Residues 484–503 (ADRKGKGKDKPTTKDTRDTA) are compositionally biased toward basic and acidic residues. Residues 484 to 513 (ADRKGKGKDKPTTKDTRDTAAPEEENLIDA) form a disordered region. Over residues 504–513 (APEEENLIDA) the composition is skewed to acidic residues.

Belongs to the ATPase alpha/beta chains family. As to quaternary structure, V-ATPase is a heteromultimeric enzyme composed of a peripheral catalytic V1 complex (components A to H) attached to an integral membrane V0 proton pore complex (components: a, c, c', c'', d, e, f and VOA1).

The protein localises to the vacuole membrane. Non-catalytic subunit of the V1 complex of vacuolar(H+)-ATPase (V-ATPase), a multisubunit enzyme composed of a peripheral complex (V1) that hydrolyzes ATP and a membrane integral complex (V0) that translocates protons. V-ATPase is responsible for acidifying and maintaining the pH of intracellular compartments. The chain is V-type proton ATPase subunit B from Neurospora crassa (strain ATCC 24698 / 74-OR23-1A / CBS 708.71 / DSM 1257 / FGSC 987).